Here is a 115-residue protein sequence, read N- to C-terminus: Pycsar effector protein TpPycTM (115 aa).

The next 2 helical transmembrane spans lie at 44 to 64 and 74 to 94; these read IGNLLLIDTITVGIFITYATN and VWNILLFITGLIFTVSSVILV.

Its subcellular location is the cell inner membrane. Its function is as follows. Pycsar (pyrimidine cyclase system for antiphage resistance) provides immunity against bacteriophage. The pyrimidine cyclase (PycC) synthesizes cyclic nucleotides in response to infection; these serve as specific second messenger signals. The signals activate the adjacent effector, leading to bacterial cell death and abortive phage infection. A clade C Pycsar system. The effector gene of a two-gene Pycsar system. Expression of this and adjacent uridylate cyclase TpPycC (AC A0A1T4LJ54) probably confers resistance to bacteriophage. The genes are probably only expressed in response to bacteriophage infection. Probably only responds to cUMP (produced by its cognate NTP cyclase), acts by impairing membrane integrity. The polypeptide is Pycsar effector protein TpPycTM (Treponema porcinum).